The primary structure comprises 436 residues: Histidinol dehydrogenase (436 aa).

NAD(+) is bound by residues Tyr-136, Gln-198, and Asn-221. Ser-244, Gln-266, and His-269 together coordinate substrate. Residues Gln-266 and His-269 each coordinate Zn(2+). Catalysis depends on proton acceptor residues Glu-334 and His-335. The substrate site is built by His-335, Asp-368, Glu-422, and His-427. Asp-368 serves as a coordination point for Zn(2+). Position 427 (His-427) interacts with Zn(2+).

It belongs to the histidinol dehydrogenase family. Requires Zn(2+) as cofactor.

It carries out the reaction L-histidinol + 2 NAD(+) + H2O = L-histidine + 2 NADH + 3 H(+). It functions in the pathway amino-acid biosynthesis; L-histidine biosynthesis; L-histidine from 5-phospho-alpha-D-ribose 1-diphosphate: step 9/9. Catalyzes the sequential NAD-dependent oxidations of L-histidinol to L-histidinaldehyde and then to L-histidine. The protein is Histidinol dehydrogenase of Dehalococcoides mccartyi (strain ATCC BAA-2266 / KCTC 15142 / 195) (Dehalococcoides ethenogenes (strain 195)).